A 78-amino-acid polypeptide reads, in one-letter code: Large ribosomal subunit protein eL20 (78 aa).

The protein belongs to the eukaryotic ribosomal protein eL20 family. As to quaternary structure, part of the 50S ribosomal subunit. Binds 23S rRNA.

The polypeptide is Large ribosomal subunit protein eL20 (Pyrobaculum calidifontis (strain DSM 21063 / JCM 11548 / VA1)).